The following is a 385-amino-acid chain: Mannitol-1-phosphate 5-dehydrogenase (385 aa).

Residue Ala-3–Gly-14 participates in NAD(+) binding.

Belongs to the mannitol dehydrogenase family.

It carries out the reaction D-mannitol 1-phosphate + NAD(+) = beta-D-fructose 6-phosphate + NADH + H(+). This chain is Mannitol-1-phosphate 5-dehydrogenase, found in Pasteurella multocida (strain Pm70).